Reading from the N-terminus, the 317-residue chain is Melanocyte-stimulating hormone receptor (317 aa).

Topologically, residues 1–37 are extracellular; sequence MPMQGAQRRLLGSLNSTPTATPNLGLAANHTGAPCLE. N-linked (GlcNAc...) asparagine glycosylation is present at Asn29. The chain crosses the membrane as a helical span at residues 38 to 63; it reads VSIPHGLFLSLGLVSLVENVLVVAAI. The Cytoplasmic portion of the chain corresponds to 64-72; that stretch reads AKNRNLHSP. Residues 73–93 traverse the membrane as a helical segment; it reads MYCFICCLALSDLLVSGSNML. The Extracellular portion of the chain corresponds to 94–118; the sequence is ETAVILLLEAGALATRASVVQQLQN. A helical membrane pass occupies residues 119 to 140; sequence TIDVLTCSSMLCSLCFLGAIAV. The Cytoplasmic portion of the chain corresponds to 141–163; sequence DRYVSIFYALRYHSIVTLPRARR. A helical transmembrane segment spans residues 164-183; it reads AIAAIWVASVLSSTLFIAYC. At 184–191 the chain is on the extracellular side; that stretch reads DHAAVLLC. A helical transmembrane segment spans residues 192–211; the sequence is LVVFFLAMLVLMAVLYVHML. Over 212-240 the chain is Cytoplasmic; the sequence is ARACQHAQGITRLHKRQLPAHQGFGLRGA. The chain crosses the membrane as a helical span at residues 241-266; it reads ATLTILLGIFFLCWGPFFLHLMLVVL. At 267–279 the chain is on the extracellular side; it reads CPQHLTCSCIFKN. Residues 280 to 300 traverse the membrane as a helical segment; the sequence is FKVFLTLIICNTIIDPLIYAF. The Cytoplasmic segment spans residues 301-317; that stretch reads RSQELCRTLKEVLLCSW. Cys315 is lipidated: S-palmitoyl cysteine.

This sequence belongs to the G-protein coupled receptor 1 family. In terms of assembly, interacts with MGRN1, but does not undergo MGRN1-mediated ubiquitination; this interaction competes with GNAS-binding and thus inhibits agonist-induced cAMP production. Interacts with OPN3; the interaction results in a decrease in MC1R-mediated cAMP signaling and ultimately a decrease in melanin production in melanocytes.

The protein resides in the cell membrane. Its function is as follows. Receptor for MSH (alpha, beta and gamma) and ACTH. The activity of this receptor is mediated by G proteins which activate adenylate cyclase. Mediates melanogenesis, the production of eumelanin (black/brown) and phaeomelanin (red/yellow), via regulation of cAMP signaling in melanocytes. This chain is Melanocyte-stimulating hormone receptor (MC1R), found in Alouatta caraya (Black howler monkey).